Here is a 118-residue protein sequence, read N- to C-terminus: REPTOR-binding partner (118 aa).

Polar residues predominate over residues 1-20 (MADMEIQSNKMSITEETQVQ). The disordered stretch occupies residues 1-53 (MADMEIQSNKMSITEETQVQTRKECGKRGRKPGRKTSTEKLDMKAKLERSRQS). Basic and acidic residues predominate over residues 36–53 (TSTEKLDMKAKLERSRQS). The interval 40–77 (KLDMKAKLERSRQSARECRARKKLRYQYLEELVADREK) is basic motif. The region spanning 40–90 (KLDMKAKLERSRQSARECRARKKLRYQYLEELVADREKAVVALRTELERLI) is the bZIP domain. The segment at 82–89 (LRTELERL) is leucine-zipper.

The protein belongs to the bZIP family. ATF subfamily. Homodimer. Interacts (via C-terminus) with REPTOR (via C-terminus).

Its subcellular location is the nucleus. It is found in the chromosome. In terms of biological role, transcriptional regulator that acts in the TORC1 signaling pathway to regulate energy homeostasis and promote survival during nutrient deprivation. Interacts with REPTOR to form a transcriptional activator complex that functions downstream of TORC1 to up-regulate the expression of most target genes induced by TORC1 inhibition. In the complex, acts to enhance the binding of the transcriptional activator REPTOR to the regulatory sequences of target genes. Under normal conditions TORC1 is active, inhibiting the formation of the REPTOR/REPTOR-BP complex by phosphorylating REPTOR and mediates its cytoplasmic retention by forming a docking site for 14-3-3 proteins. Upon TORC1 inhibition resulting from nutrient stress, REPTOR is recruited into the nucleus where it interacts with REPTOR-BP and together they maintain organismal metabolism by activating the expression of target stress response genes including those involved in glycogenesis and triglyceride biosynthesis. The complex also appears to negatively regulate some aspects of TORC1-dependent larval growth. In Drosophila melanogaster (Fruit fly), this protein is REPTOR-binding partner.